Reading from the N-terminus, the 361-residue chain is Probable mannose-1-phosphate guanylyltransferase 2 (361 aa).

GDP-alpha-D-mannose is bound by residues leucine 6 and valine 7. 5 residues coordinate diphosphate: glycine 9, glycine 11, threonine 12, arginine 13, and lysine 23. Residues glycine 85, asparagine 109, aspartate 111, glycine 146, and asparagine 173 each contribute to the GDP-alpha-D-mannose site.

This sequence belongs to the transferase hexapeptide repeat family.

It carries out the reaction alpha-D-mannose 1-phosphate + GTP + H(+) = GDP-alpha-D-mannose + diphosphate. The protein operates within nucleotide-sugar biosynthesis; GDP-alpha-D-mannose biosynthesis; GDP-alpha-D-mannose from alpha-D-mannose 1-phosphate (GTP route): step 1/1. Catalyzes a reaction of the Smirnoff-Wheeler pathway, the major route to ascorbate biosynthesis in plants. The polypeptide is Probable mannose-1-phosphate guanylyltransferase 2 (Oryza sativa subsp. japonica (Rice)).